The sequence spans 122 residues: Large ribosomal subunit protein uL14 (122 aa).

It belongs to the universal ribosomal protein uL14 family. In terms of assembly, part of the 50S ribosomal subunit. Forms a cluster with proteins L3 and L19. In the 70S ribosome, L14 and L19 interact and together make contacts with the 16S rRNA in bridges B5 and B8.

Binds to 23S rRNA. Forms part of two intersubunit bridges in the 70S ribosome. The polypeptide is Large ribosomal subunit protein uL14 (Aeromonas salmonicida (strain A449)).